Here is a 356-residue protein sequence, read N- to C-terminus: MLARAARGTGALLLKGSVQASARAPRRASSGLPRNTVVLFVPQQEAWVVERMGRFHRILEPGLNILIPVLDRIRYVQSLKEIVINVPEQSAVTLDNVTLQIDGVLYLRIMDPYKASYGVEDPEYAVTQLAQTTMRSELGKLSLDKVFRERESLNASIVDAINQAADCWGIRCLRYEIKDIHVPPRVKESMKMQVEAERRKRATVLESEGTRESAINVAEGKKQAQILASEAEKAEQINQAAGEASAVLAKAKAKAEAIRILAAALTQHNGDAAASLTVAEQYVSAFSKLAKDSNTILLPSNPGDVTSMVAQAMGVYGALTKAPIPEAQDSVSSRSSRDVRSTDASLDEELDRVKLS.

A mitochondrion-targeting transit peptide spans 1 to 28; the sequence is MLARAARGTGALLLKGSVQASARAPRRA. The residue at position 17 (S17) is a Phosphoserine; by PKC/PRKCZ. Y124 carries the post-translational modification Phosphotyrosine. Residue K145 is modified to N6-acetyllysine; alternate. At K145 the chain carries N6-succinyllysine; alternate. A coiled-coil region spans residues 215-252; sequence INVAEGKKQAQILASEAEKAEQINQAAGEASAVLAKAK. K233 is subject to N6-acetyllysine. The interval 326–356 is disordered; that stretch reads EAQDSVSSRSSRDVRSTDASLDEELDRVKLS. S330 bears the Phosphoserine mark.

Belongs to the band 7/mec-2 family. Forms homooligomers. Interacts with MFN2; may form heterooligomers with this mediator of mitochondrial fusion. Interacts with PHB1 and PHB2; stabilizes and recruits them to cardiolipin-enriched mitochondrial membranes. Interacts with CACNA2D2.

It localises to the cell membrane. It is found in the mitochondrion. The protein resides in the mitochondrion inner membrane. The protein localises to the mitochondrion intermembrane space. Its subcellular location is the membrane raft. It localises to the cytoplasm. It is found in the cytoskeleton. Functionally, mitochondrial protein that probably regulates the biogenesis and the activity of mitochondria. Stimulates cardiolipin biosynthesis, binds cardiolipin-enriched membranes where it recruits and stabilizes some proteins including prohibitin and may therefore act in the organization of functional microdomains in mitochondrial membranes. Through regulation of the mitochondrial function may play a role into several biological processes including cell migration, cell proliferation, T-cell activation, calcium homeostasis and cellular response to stress. May play a role in calcium homeostasis through negative regulation of calcium efflux from mitochondria. Required for mitochondrial hyperfusion a pro-survival cellular response to stress which results in increased ATP production by mitochondria. May also regulate the organization of functional domains at the plasma membrane and play a role in T-cell activation through association with the T-cell receptor signaling complex and its regulation. The chain is Stomatin-like protein 2, mitochondrial (STOML2) from Bos taurus (Bovine).